Consider the following 251-residue polypeptide: Triosephosphate isomerase (251 aa).

9–11 contributes to the substrate binding site; sequence NWK. His96 acts as the Electrophile in catalysis. Glu168 functions as the Proton acceptor in the catalytic mechanism. Substrate contacts are provided by residues Gly174, Ser214, and 235–236; that span reads GG.

The protein belongs to the triosephosphate isomerase family. As to quaternary structure, homodimer.

The protein resides in the cytoplasm. It catalyses the reaction D-glyceraldehyde 3-phosphate = dihydroxyacetone phosphate. It functions in the pathway carbohydrate biosynthesis; gluconeogenesis. The protein operates within carbohydrate degradation; glycolysis; D-glyceraldehyde 3-phosphate from glycerone phosphate: step 1/1. Involved in the gluconeogenesis. Catalyzes stereospecifically the conversion of dihydroxyacetone phosphate (DHAP) to D-glyceraldehyde-3-phosphate (G3P). This chain is Triosephosphate isomerase, found in Porphyromonas gingivalis (strain ATCC BAA-308 / W83).